The primary structure comprises 493 residues: Involucrin (493 aa).

Disordered stretches follow at residues 1 to 47 (MSQQ…CQKV), 60 to 123 (EEKH…GQLE), and 139 to 493 (KRDE…GQHE). Low complexity predominate over residues 76-89 (EQQQPQEQELQQQH). Basic and acidic residues-rich tracts occupy residues 90–116 (WEQDKEHQKAENPEQQLKQEKVQREKQ), 139–151 (KRDEQLGTKKEQL), 161–174 (QLKHLEQEEGHLEL), 184–193 (NLEHQEKPLE), and 201–213 (QLKHLEQQEKPLE). A compositionally biased stretch (polar residues) spans 228–240 (QEGQSELPEQQRG). Composition is skewed to basic and acidic residues over residues 250–270 (GQLKHLEEQKGQLKHLEHEEG), 282–360 (KHLE…HEGQ), 372–386 (KHLEQEEKQLEHPEQ), 411–431 (KHLEQQEKQLEHPQQQEEQLK), and 439–450 (QLKDLEQQERQL). The span at 473-493 (GEVLLPVEQQQQKQEVQGQHE) shows a compositional bias: low complexity.

Belongs to the involucrin family. Directly or indirectly cross-linked to cornifelin (CNFN). In terms of processing, substrate of transglutaminase. Specific glutamines or lysines are cross-linked to keratins, desmoplakin and to inter involucrin molecules. In terms of tissue distribution, keratinocytes of epidermis and other stratified squamous epithelia.

The protein resides in the cytoplasm. Its function is as follows. Part of the insoluble cornified cell envelope (CE) of stratified squamous epithelia. This chain is Involucrin (IVL), found in Saguinus oedipus (Cotton-top tamarin).